Here is a 338-residue protein sequence, read N- to C-terminus: Protein RecA (338 aa).

68–75 (GPESSGKT) is an ATP binding site.

The protein belongs to the RecA family.

It is found in the cytoplasm. Can catalyze the hydrolysis of ATP in the presence of single-stranded DNA, the ATP-dependent uptake of single-stranded DNA by duplex DNA, and the ATP-dependent hybridization of homologous single-stranded DNAs. It interacts with LexA causing its activation and leading to its autocatalytic cleavage. The protein is Protein RecA of Citrifermentans bemidjiense (strain ATCC BAA-1014 / DSM 16622 / JCM 12645 / Bem) (Geobacter bemidjiensis).